The primary structure comprises 565 residues: uncharacterized protein (565 aa).

Positions 1-21 (MKIPSQQVLLALPLLASPAQS) are cleaved as a signal peptide. N-linked (GlcNAc...) asparagine glycosylation is found at asparagine 46 and asparagine 88. In terms of domain architecture, FAD-binding PCMH-type spans 118-302 (QGIVPYYSVS…TSVTYKTHPK (185 aa)). The residue at position 155 (histidine 155) is a Pros-8alpha-FAD histidine. Asparagine 191, asparagine 314, asparagine 364, asparagine 371, and asparagine 484 each carry an N-linked (GlcNAc...) asparagine glycan.

It belongs to the oxygen-dependent FAD-linked oxidoreductase family. Requires FAD as cofactor.

The protein resides in the secreted. This is an uncharacterized protein from Arthroderma benhamiae (strain ATCC MYA-4681 / CBS 112371) (Trichophyton mentagrophytes).